The chain runs to 575 residues: Urease subunit alpha (575 aa).

The Urease domain occupies 137–575 (GGIDCHIHFI…LPMTQRYFLF (439 aa)). His142, His144, and Lys225 together coordinate Ni(2+). The residue at position 225 (Lys225) is an N6-carboxylysine. Residue His227 coordinates substrate. Ni(2+) is bound by residues His254 and His280. His328 functions as the Proton donor in the catalytic mechanism. A Ni(2+)-binding site is contributed by Asp368.

It belongs to the metallo-dependent hydrolases superfamily. Urease alpha subunit family. Heterotrimer of UreA (gamma), UreB (beta) and UreC (alpha) subunits. Three heterotrimers associate to form the active enzyme. Ni cation serves as cofactor. In terms of processing, carboxylation allows a single lysine to coordinate two nickel ions.

It localises to the cytoplasm. It catalyses the reaction urea + 2 H2O + H(+) = hydrogencarbonate + 2 NH4(+). It participates in nitrogen metabolism; urea degradation; CO(2) and NH(3) from urea (urease route): step 1/1. The protein is Urease subunit alpha of Methylibium petroleiphilum (strain ATCC BAA-1232 / LMG 22953 / PM1).